A 123-amino-acid chain; its full sequence is MDLLHKNMKHLWFFLLLVAAPRWVLSQVQLQQWGAGLLKPSETLSLTCAVYGGSFSGYYWSWIRQPPGKGLEWIGEINHSGSTNYNPSLKSRVTISVDTSKNQFSLKLSSVTAADTAVYYCAR.

An N-terminal signal peptide occupies residues 1-26 (MDLLHKNMKHLWFFLLLVAAPRWVLS). Residues 26 to 123 (SQVQLQQWGA…ADTAVYYCAR (98 aa)) are v region. Residues 27 to 51 (QVQLQQWGAGLLKPSETLSLTCAVY) form a framework-1 region. The Ig-like domain maps to 27 to 123 (QVQLQQWGAG…ADTAVYYCAR (97 aa)). Cys-48 and Cys-121 are joined by a disulfide. The complementarity-determining-1 stretch occupies residues 52–59 (GGSFSGYY). The framework-2 stretch occupies residues 60–76 (WSWIRQPPGKGLEWIGE). Residues 77–83 (INHSGST) are complementarity-determining-2. The N-linked (GlcNAc...) asparagine glycan is linked to Asn-78. The framework-3 stretch occupies residues 84 to 121 (NYNPSLKSRVTISVDTSKNQFSLKLSSVTAADTAVYYC). A complementarity-determining-3 region spans residues 122–123 (AR).

Immunoglobulins are composed of two identical heavy chains and two identical light chains; disulfide-linked.

It is found in the secreted. The protein resides in the cell membrane. Its function is as follows. V region of the variable domain of immunoglobulin heavy chains that participates in the antigen recognition. Immunoglobulins, also known as antibodies, are membrane-bound or secreted glycoproteins produced by B lymphocytes. In the recognition phase of humoral immunity, the membrane-bound immunoglobulins serve as receptors which, upon binding of a specific antigen, trigger the clonal expansion and differentiation of B lymphocytes into immunoglobulins-secreting plasma cells. Secreted immunoglobulins mediate the effector phase of humoral immunity, which results in the elimination of bound antigens. The antigen binding site is formed by the variable domain of one heavy chain, together with that of its associated light chain. Thus, each immunoglobulin has two antigen binding sites with remarkable affinity for a particular antigen. The variable domains are assembled by a process called V-(D)-J rearrangement and can then be subjected to somatic hypermutations which, after exposure to antigen and selection, allow affinity maturation for a particular antigen. The protein is Immunoglobulin heavy variable 4-34 of Homo sapiens (Human).